A 704-amino-acid chain; its full sequence is MEAIKKVFEQKKAQDATAFVAFVTAGYPKKEDTVPVLLALQAGGADIIELGIPFSDPIADGPVIQEANTVALKNDIDYPTVLGQIREARQQGLTAPVLLMGYYNPMLAYGEDKAIQDAAEAGANGFIMVDLPPEEAIAFRQKCAASNLSYVPLIAPSTTLKRIQFLASIADSFIYVVSKMGTTGSSANVAVNEELPTILSRIREYTHVPLAVGFGVATRDQFNYVADAGADGVVIGSRIVNAIKAAGDGEVPQFVENYCREVSGKGEPSRVRSPGAAQRTPSQLTPNAETAKGVENILPARFGQFGGQYVPESLVDALAELEEAHKSAIEDPAFWEEVRSLYTYSNRPSNLYLAENLTKEAGGANIWLKREDLNHTGSHKINNALGQILLAKRIGKTRIIAETGAGQHGVATATVCAKFGLECVIYMGAEDVRRQALNVFRIEMLGGKAWVIPVHSGSCTLKDAVNEAMRDWVTNLSTTHYLVGSAIGPHPFPTIVRDFQKVIGEEIKAQLKEVRGKLPDVVVACVGGGSNAIGTFYDFIPDKSVRLVGVEAGGEGIDGHKHSATLSMGQPGVLHGVRTYILQDKAGQIIETHSISAGLDYPGVGPEHAWLKDSGRADYVVCTDEDALRGFRMLTQKEGIIPALESSHAIWEGVKIAKSLPKDKDIVICLSGRGDKDVEQISELLPKWADKLDWHVSSNAIPSK.

Residues 1–292 (MEAIKKVFEQ…QLTPNAETAK (292 aa)) are tryptophan synthase alpha chain. Residues Glu-49 and Asp-60 each act as proton acceptor in the active site. Residues 293 to 704 (GVENILPARF…HVSSNAIPSK (412 aa)) are tryptophan synthase beta chain. Position 380 is an N6-(pyridoxal phosphate)lysine (Lys-380).

In the N-terminal section; belongs to the TrpA family. It in the C-terminal section; belongs to the TrpB family. Pyridoxal 5'-phosphate serves as cofactor.

It carries out the reaction (1S,2R)-1-C-(indol-3-yl)glycerol 3-phosphate + L-serine = D-glyceraldehyde 3-phosphate + L-tryptophan + H2O. It functions in the pathway amino-acid biosynthesis; L-tryptophan biosynthesis; L-tryptophan from chorismate: step 5/5. The polypeptide is Tryptophan synthase (TRP-1) (Coprinopsis cinerea (strain Okayama-7 / 130 / ATCC MYA-4618 / FGSC 9003) (Inky cap fungus)).